Consider the following 768-residue polypeptide: Gephyrin (768 aa).

Residues 14 to 166 (QIRVGVLTVS…LPGSKKGSQE (153 aa)) are MPT Mo-transferase. An interaction with GABARAP region spans residues 153–348 (LIINLPGSKK…VDITKVARRH (196 aa)). 2 disordered regions span residues 194 to 245 (DELE…DSSS) and 273 to 316 (TASL…ASRV). A compositionally biased stretch (pro residues) spans 200–212 (PSPPPPLSPPPTT). 2 positions are modified to phosphoserine: serine 201 and serine 207. Threonine 211 carries the post-translational modification Phosphothreonine. Serine 213 bears the Phosphoserine mark. Residue cysteine 225 is the site of S-palmitoyl cysteine attachment. Positions 274–299 (ASLSTTPSESPRAQATSRLSTASCPT) are enriched in polar residues. Serine 275 carries the phosphoserine modification. Phosphothreonine is present on residues threonine 278 and threonine 279. Phosphoserine occurs at positions 281 and 283. Cysteine 297 carries the S-palmitoyl cysteine lipid modification. Positions 326 to 768 (SSKENILRAS…VVDVMVIGRL (443 aa)) are MPT adenylyltransferase. Serine 337 bears the Phosphoserine mark.

The protein in the N-terminal section; belongs to the MoaB/Mog family. In the C-terminal section; belongs to the MoeA family. As to quaternary structure, homotrimer, homodimer and homooligomer. Interacts with SRGAP2 (via SH3 domain). Interacts with GLRB. Interacts with GABARAP. Interacts with GABRA3. GABRA3 and GLRB occupy overlapping binding sites. Interacts with ARHGAP32; IQSEC3, INSYN1 and INSYN2A. Mg(2+) is required as a cofactor. Phosphorylated. In terms of processing, palmitoylated. Palmitoylation is stimulated by GABA type A receptors activity. Palmitoylation by ZDHHC12 regulates clustering at synapses. In terms of tissue distribution, expressed in tissues including spinal cord, brain, liver, kidney and lung.

Its subcellular location is the postsynaptic cell membrane. It is found in the cell membrane. It localises to the cytoplasm. The protein localises to the cytosol. The protein resides in the cytoskeleton. Its subcellular location is the cell projection. It is found in the dendrite. It localises to the postsynaptic density. It carries out the reaction molybdopterin + ATP + H(+) = adenylyl-molybdopterin + diphosphate. The enzyme catalyses adenylyl-molybdopterin + molybdate = Mo-molybdopterin + AMP + H(+). It participates in cofactor biosynthesis; molybdopterin biosynthesis. Its activity is regulated as follows. Inhibited by copper and tungsten. Microtubule-associated protein involved in membrane protein-cytoskeleton interactions. It is thought to anchor the inhibitory glycine receptor (GLYR) to subsynaptic microtubules. Acts as a major instructive molecule at inhibitory synapses, where it also clusters GABA type A receptors. Functionally, also has a catalytic activity and catalyzes two steps in the biosynthesis of the molybdenum cofactor. In the first step, molybdopterin is adenylated. Subsequently, molybdate is inserted into adenylated molybdopterin and AMP is released. This Rattus norvegicus (Rat) protein is Gephyrin (Gphn).